Here is a 249-residue protein sequence, read N- to C-terminus: Phosphoribosylaminoimidazole-succinocarboxamide synthase (249 aa).

This sequence belongs to the SAICAR synthetase family.

It carries out the reaction 5-amino-1-(5-phospho-D-ribosyl)imidazole-4-carboxylate + L-aspartate + ATP = (2S)-2-[5-amino-1-(5-phospho-beta-D-ribosyl)imidazole-4-carboxamido]succinate + ADP + phosphate + 2 H(+). Its pathway is purine metabolism; IMP biosynthesis via de novo pathway; 5-amino-1-(5-phospho-D-ribosyl)imidazole-4-carboxamide from 5-amino-1-(5-phospho-D-ribosyl)imidazole-4-carboxylate: step 1/2. The sequence is that of Phosphoribosylaminoimidazole-succinocarboxamide synthase from Roseiflexus castenholzii (strain DSM 13941 / HLO8).